The sequence spans 296 residues: Light-independent protochlorophyllide reductase iron-sulfur ATP-binding protein (296 aa).

Residues Gly10–Thr15 and Lys39 each bind ATP. Mg(2+) is bound at residue Ser14. 2 residues coordinate [4Fe-4S] cluster: Cys95 and Cys129. Asn180 to Arg181 provides a ligand contact to ATP.

Belongs to the NifH/BchL/ChlL family. In terms of assembly, homodimer. Protochlorophyllide reductase is composed of three subunits; ChlL, ChlN and ChlB. Requires [4Fe-4S] cluster as cofactor.

The protein resides in the plastid. The protein localises to the chloroplast. It carries out the reaction chlorophyllide a + oxidized 2[4Fe-4S]-[ferredoxin] + 2 ADP + 2 phosphate = protochlorophyllide a + reduced 2[4Fe-4S]-[ferredoxin] + 2 ATP + 2 H2O. It participates in porphyrin-containing compound metabolism; chlorophyll biosynthesis (light-independent). Its function is as follows. Component of the dark-operative protochlorophyllide reductase (DPOR) that uses Mg-ATP and reduced ferredoxin to reduce ring D of protochlorophyllide (Pchlide) to form chlorophyllide a (Chlide). This reaction is light-independent. The L component serves as a unique electron donor to the NB-component of the complex, and binds Mg-ATP. This is Light-independent protochlorophyllide reductase iron-sulfur ATP-binding protein from Mesostigma viride (Green alga).